The primary structure comprises 490 residues: Allantoin permease (490 aa).

The next 12 helical transmembrane spans lie at 36–56, 60–80, 116–136, 151–171, 190–210, 225–245, 265–285, 308–328, 350–370, 373–393, 425–445, and 448–468; these read IWMG…LIAI, PWQV…ALAL, AIMW…ILLL, ILGI…IHLL, LVYL…GGLG, TFWP…TLIL, FYGL…VTSG, YVIV…NVAA, GSFI…MESA, VYAF…VMMA, AFAA…VPVL, and LYDI…IVLM.

It belongs to the purine-cytosine permease (2.A.39) family.

It localises to the cell membrane. It carries out the reaction (S)-allantoin(in) + H(+)(in) = (S)-allantoin(out) + H(+)(out). Uptake of allantoin into the cell. Allantoin uptake is not dependent on sodium, and PucI is likely to be a proton-coupled symporter. Shows highest recognition for binding of allantoin, good recognition for binding of hydantoin, L-5-benzylhydantoin and 5-hydroxyhydantoin, and to a lesser extent for a range of nucleobases and nucleosides. The polypeptide is Allantoin permease (Bacillus subtilis (strain 168)).